Reading from the N-terminus, the 269-residue chain is Hydroxyethylthiazole kinase (269 aa).

Residue Met45 participates in substrate binding. Residues Arg121 and Thr167 each coordinate ATP. Gly194 contributes to the substrate binding site.

It belongs to the Thz kinase family. Requires Mg(2+) as cofactor.

The catalysed reaction is 5-(2-hydroxyethyl)-4-methylthiazole + ATP = 4-methyl-5-(2-phosphooxyethyl)-thiazole + ADP + H(+). It participates in cofactor biosynthesis; thiamine diphosphate biosynthesis; 4-methyl-5-(2-phosphoethyl)-thiazole from 5-(2-hydroxyethyl)-4-methylthiazole: step 1/1. In terms of biological role, catalyzes the phosphorylation of the hydroxyl group of 4-methyl-5-beta-hydroxyethylthiazole (THZ). This Brevibacillus brevis (strain 47 / JCM 6285 / NBRC 100599) protein is Hydroxyethylthiazole kinase.